Consider the following 381-residue polypeptide: Cobalt-precorrin-5B C(1)-methyltransferase (381 aa).

This sequence belongs to the CbiD family.

The enzyme catalyses Co-precorrin-5B + S-adenosyl-L-methionine = Co-precorrin-6A + S-adenosyl-L-homocysteine. It participates in cofactor biosynthesis; adenosylcobalamin biosynthesis; cob(II)yrinate a,c-diamide from sirohydrochlorin (anaerobic route): step 6/10. Functionally, catalyzes the methylation of C-1 in cobalt-precorrin-5B to form cobalt-precorrin-6A. The sequence is that of Cobalt-precorrin-5B C(1)-methyltransferase from Clostridium botulinum (strain Eklund 17B / Type B).